Consider the following 173-residue polypeptide: Putative metal-dependent hydrolase BcerKBAB4_2443 (173 aa).

Zn(2+) contacts are provided by histidine 65, histidine 156, and histidine 160.

Belongs to the metal hydrolase YfiT family. As to quaternary structure, homodimer. The cofactor is Zn(2+).

Its subcellular location is the cytoplasm. Its function is as follows. Possible metal-dependent hydrolase. In Bacillus mycoides (strain KBAB4) (Bacillus weihenstephanensis), this protein is Putative metal-dependent hydrolase BcerKBAB4_2443.